Here is a 196-residue protein sequence, read N- to C-terminus: Adenylate kinase (196 aa).

9–17 (GIPGVGKST) is a binding site for ATP.

Belongs to the archaeal adenylate kinase family.

It localises to the cytoplasm. The enzyme catalyses AMP + ATP = 2 ADP. This is Adenylate kinase (adkA) from Pyrococcus horikoshii (strain ATCC 700860 / DSM 12428 / JCM 9974 / NBRC 100139 / OT-3).